The sequence spans 234 residues: Segregation and condensation protein A (234 aa).

Belongs to the ScpA family. Component of a cohesin-like complex composed of ScpA, ScpB and the Smc homodimer, in which ScpA and ScpB bind to the head domain of Smc. The presence of the three proteins is required for the association of the complex with DNA.

The protein localises to the cytoplasm. Its function is as follows. Participates in chromosomal partition during cell division. May act via the formation of a condensin-like complex containing Smc and ScpB that pull DNA away from mid-cell into both cell halves. This Streptococcus pyogenes serotype M6 (strain ATCC BAA-946 / MGAS10394) protein is Segregation and condensation protein A.